A 207-amino-acid chain; its full sequence is Large ribosomal subunit protein uL4 (207 aa).

The protein belongs to the universal ribosomal protein uL4 family. In terms of assembly, part of the 50S ribosomal subunit.

In terms of biological role, one of the primary rRNA binding proteins, this protein initially binds near the 5'-end of the 23S rRNA. It is important during the early stages of 50S assembly. It makes multiple contacts with different domains of the 23S rRNA in the assembled 50S subunit and ribosome. Functionally, forms part of the polypeptide exit tunnel. In Rickettsia peacockii (strain Rustic), this protein is Large ribosomal subunit protein uL4.